Consider the following 390-residue polypeptide: Adherens junction-associated protein 1 (390 aa).

The first 37 residues, 1 to 37, serve as a signal peptide directing secretion; the sequence is MWITQLLGIRSGPPLGSHAWILIAIFQLAMDFIICES. The Extracellular segment spans residues 38–262; sequence ESPGKAYKHL…NDTSGLAVHQ (225 aa). The segment at 218 to 253 is disordered; the sequence is LQNPGIHNGKKSPGRISTTDPNPGNGKTARPPRIPN. A helical transmembrane segment spans residues 263–283; that stretch reads IITITVSLIMVIAALITTLVL. Residues 283–390 form a targeting signals region; that stretch reads LKNCCAQSGN…VSEKWFEISC (108 aa). The Cytoplasmic portion of the chain corresponds to 284-390; it reads KNCCAQSGNA…VSEKWFEISC (107 aa).

The protein resides in the basolateral cell membrane. It is found in the apical cell membrane. It localises to the cell junction. Its subcellular location is the adherens junction. In terms of biological role, may play a role in cell adhesion and cell migration. This chain is Adherens junction-associated protein 1 (ajap1), found in Xenopus tropicalis (Western clawed frog).